The following is a 179-amino-acid chain: Protein GrpE (179 aa).

A disordered region spans residues 1–20 (MSEETKEEIKNEKVDEEVTE).

The protein belongs to the GrpE family. In terms of assembly, homodimer.

The protein localises to the cytoplasm. Its function is as follows. Participates actively in the response to hyperosmotic and heat shock by preventing the aggregation of stress-denatured proteins, in association with DnaK and GrpE. It is the nucleotide exchange factor for DnaK and may function as a thermosensor. Unfolded proteins bind initially to DnaJ; upon interaction with the DnaJ-bound protein, DnaK hydrolyzes its bound ATP, resulting in the formation of a stable complex. GrpE releases ADP from DnaK; ATP binding to DnaK triggers the release of the substrate protein, thus completing the reaction cycle. Several rounds of ATP-dependent interactions between DnaJ, DnaK and GrpE are required for fully efficient folding. The protein is Protein GrpE of Lactococcus lactis subsp. lactis (strain IL1403) (Streptococcus lactis).